We begin with the raw amino-acid sequence, 368 residues long: tRNA-specific 2-thiouridylase MnmA (368 aa).

ATP-binding positions include 11–18 and methionine 37; that span reads GMSGGVDS. The interaction with target base in tRNA stretch occupies residues 97–99; the sequence is NPD. Cysteine 102 (nucleophile) is an active-site residue. Cysteine 102 and cysteine 199 are joined by a disulfide. Residue glycine 127 coordinates ATP. The tract at residues 149–151 is interaction with tRNA; it reads KDQ. Cysteine 199 (cysteine persulfide intermediate) is an active-site residue. The tract at residues 311-312 is interaction with tRNA; that stretch reads RY.

It belongs to the MnmA/TRMU family. Interacts with TusE.

The protein localises to the cytoplasm. The enzyme catalyses S-sulfanyl-L-cysteinyl-[protein] + uridine(34) in tRNA + AH2 + ATP = 2-thiouridine(34) in tRNA + L-cysteinyl-[protein] + A + AMP + diphosphate + H(+). Catalyzes the 2-thiolation of uridine at the wobble position (U34) of tRNA(Lys), tRNA(Glu) and tRNA(Gln), leading to the formation of s(2)U34, the first step of tRNA-mnm(5)s(2)U34 synthesis. Sulfur is provided by IscS, via a sulfur-relay system. Binds ATP and its substrate tRNAs. The sequence is that of tRNA-specific 2-thiouridylase MnmA from Salmonella typhimurium (strain LT2 / SGSC1412 / ATCC 700720).